Reading from the N-terminus, the 537-residue chain is Glucan 1,6-alpha-glucosidase (537 aa).

D194 acts as the Nucleophile in catalysis. The active-site Proton donor is E236.

It belongs to the glycosyl hydrolase 13 family.

The protein localises to the cytoplasm. It carries out the reaction Hydrolysis of (1-&gt;6)-alpha-D-glucosidic linkages in (1-&gt;6)-alpha-D-glucans and derived oligosaccharides.. The physiological substrates may be short isomaltosaccharides. The chain is Glucan 1,6-alpha-glucosidase (dexB) from Streptococcus dysgalactiae subsp. equisimilis (Streptococcus equisimilis).